A 1077-amino-acid chain; its full sequence is TSC22 domain family protein 1 (1077 aa).

Residues 1-98 (MHQPPESTAA…SQAQLQGQPL (98 aa)) are required for interaction with TGFBR1 and promotion of TGF-beta signaling. 5 disordered regions span residues 22-112 (MAHP…SGFQ), 125-283 (ISSN…VPSS), 458-492 (QTPT…SVGS), 842-874 (SSAA…GSLV), and 909-947 (QAIG…SDGS). The span at 58–70 (FPPPSLLQPPPPA) shows a compositional bias: pro residues. The span at 84-96 (SLNLLSQAQLQGQ) shows a compositional bias: low complexity. The span at 133–142 (EDTESYDDLD) shows a compositional bias: acidic residues. The segment covering 216–240 (HPHHLHHHHHPHHGHHLHHGHHHSS) has biased composition (basic residues). A Phosphoserine modification is found at S263. The segment covering 471–489 (TSGSSVSSSVSTLSHYTES) has biased composition (low complexity). The span at 852 to 874 (VPTNLVPPQNIAQPPATQNGSLV) shows a compositional bias: polar residues. Over residues 933–947 (MSGDSGGMSAVSDGS) the composition is skewed to low complexity. A leucine-zipper region spans residues 1010 to 1031 (LKEQIKELIEKNSQLEQENNLL). Residues 1042-1077 (QFQAQLQTGSPPATTQPQGTTQPPAQPASQGSGSTA) are disordered. Over residues 1048-1077 (QTGSPPATTQPQGTTQPPAQPASQGSGSTA) the composition is skewed to low complexity.

This sequence belongs to the TSC-22/Dip/Bun family. Forms homodimers. Forms heterodimers. Component of a complex composed of TSC22D1 (via N-terminus), TGFBR1 and TGFBR2; the interaction between TSC22D1 and TGFBR1 is inhibited by SMAD7 and promoted by TGFB1. Interacts with SMAD7; the interaction requires TGF-beta and the interaction is inhibited by TGFBR1. Interacts with TPT1/fortilin; interaction results in the destabilization of TSC22D1 protein and prevents TSC22D1-mediated apoptosis. Interacts with SMAD4 (via N-terminus). Interacts with ACVRL1/ALK1, ACVR1/ALK2, BMPR1A/ALK3, ACVR1B/ALK4, BMPR1B/ALK6, ACVR2A/ACTRII, and BMPR2. Interacts with SMAD6. Interacts with TFE3; the interaction is enhanced in the presence of TGF-beta. As to quaternary structure, forms a heterodimer with TSC22D4/THG1. In terms of assembly, forms a heterodimer with TSC22D4/THG1. Interacts with histone H1-2. Interacts with GNL3. Expressed in bone marrow cells (at protein level). Expressed in T-cells. Expressed in the brain. As to expression, expressed in the myoepithelial cells of the mammary gland ducts and alveoli, expression is consistent throughout pregnancy, lactation and involution (at protein level). Expressed in the cortex, medulla and papilla of the kidney. In terms of tissue distribution, expressed in the myoepithelial cells of the mammary gland, expression significantly increases in the secretory luminal epithelium of the mammary gland at the initiation of involution, with levels decreasing from day 3 of involution onwards (at protein level). Expressed in the cortex, medulla and papilla of the kidney.

The protein resides in the cytoplasm. The protein localises to the nucleus. It is found in the cell membrane. It localises to the mitochondrion. Transcriptional repressor. Acts on the C-type natriuretic peptide (CNP) promoter. Acts to promote CASP3-mediated apoptosis. Positively regulates TGF-beta signaling by interacting with SMAD7 which inhibits binding of SMAD7 to TGFBR1, preventing recruitment of SMURF ubiquitin ligases to TGFBR1 and inhibiting SMURF-mediated ubiquitination and degradation of TGFBR1. Contributes to enhancement of TGF-beta signaling by binding to and modulating the transcription activator activity of SMAD4. Promotes TGF-beta-induced transcription of COL1A2; via its interaction with TFE3 at E-boxes in the gene proximal promoter. Plays a role in the repression of hematopoietic precursor cell growth. Promotes IL2 deprivation-induced apoptosis in T-lymphocytes, via repression of TSC22D3/GILZ transcription and activation of the caspase cascade. In terms of biological role, may act to negatively regulate TGFB3 signaling and thereby inhibit cell death in mammary gland cells. Functionally, positively regulates cell death in response to TGFB3 during mammary gland involution. This chain is TSC22 domain family protein 1, found in Mus musculus (Mouse).